The sequence spans 208 residues: Single-stranded DNA-binding protein DdrA (208 aa).

This sequence belongs to the RAD52 family. As to quaternary structure, homooligomer composed of 8 to 10 subunits; probably arranged in a ring-structure.

In terms of biological role, ssDNA-binding protein that contributes to the ionizing radiation resistance of D.radiodurans. Plays a role in DNA repair and genome reconstitution, in a RecA-independent process, since DdrA is essential for recovery from severe genomic fragmentation as a result of exposure to severe levels of ionizing radiation in an environment lacking nutrients. In vitro, binds to the 3'-ends of single-stranded DNA, protecting them from nuclease degradation. Thus, DdrA is part of a DNA end-protection system that helps to preserve genome integrity following irradiation or desiccation. Does not display DNA strand annealing activity, unlike eukaryotic Rad52 protein homologs. In Deinococcus radiodurans (strain ATCC 13939 / DSM 20539 / JCM 16871 / CCUG 27074 / LMG 4051 / NBRC 15346 / NCIMB 9279 / VKM B-1422 / R1), this protein is Single-stranded DNA-binding protein DdrA (ddrA).